Here is a 284-residue protein sequence, read N- to C-terminus: Acetylglutamate kinase (284 aa).

Substrate contacts are provided by residues 64–65 (GG), Arg86, and Asn179.

This sequence belongs to the acetylglutamate kinase family. ArgB subfamily.

The protein resides in the cytoplasm. The enzyme catalyses N-acetyl-L-glutamate + ATP = N-acetyl-L-glutamyl 5-phosphate + ADP. It participates in amino-acid biosynthesis; L-arginine biosynthesis; N(2)-acetyl-L-ornithine from L-glutamate: step 2/4. Catalyzes the ATP-dependent phosphorylation of N-acetyl-L-glutamate. In Prochlorococcus marinus subsp. pastoris (strain CCMP1986 / NIES-2087 / MED4), this protein is Acetylglutamate kinase.